The following is a 356-amino-acid chain: Peptide chain release factor 1 (356 aa).

Q232 carries the post-translational modification N5-methylglutamine.

Belongs to the prokaryotic/mitochondrial release factor family. Methylated by PrmC. Methylation increases the termination efficiency of RF1.

The protein localises to the cytoplasm. In terms of biological role, peptide chain release factor 1 directs the termination of translation in response to the peptide chain termination codons UAG and UAA. The chain is Peptide chain release factor 1 from Thermoanaerobacter pseudethanolicus (strain ATCC 33223 / 39E) (Clostridium thermohydrosulfuricum).